Reading from the N-terminus, the 291-residue chain is Small ribosomal subunit protein uS2 (291 aa).

Positions 255–291 (AGAATGEWSEAQGAQWETGTGAPAADWAAEPAKESSW) are disordered.

It belongs to the universal ribosomal protein uS2 family. Component of the small ribosomal subunit. Mature ribosomes consist of a small (40S) and a large (60S) subunit. The 40S subunit contains about 33 different proteins and 1 molecule of RNA (18S). The 60S subunit contains about 49 different proteins and 3 molecules of RNA (25S, 5.8S and 5S). Interacts with RPS21.

The protein localises to the cytoplasm. Its function is as follows. Required for the assembly and/or stability of the 40S ribosomal subunit. Required for the processing of the 20S rRNA-precursor to mature 18S rRNA in a late step of the maturation of 40S ribosomal subunits. The protein is Small ribosomal subunit protein uS2 of Podospora anserina (strain S / ATCC MYA-4624 / DSM 980 / FGSC 10383) (Pleurage anserina).